Reading from the N-terminus, the 238-residue chain is Purine nucleoside phosphorylase DeoD-type (238 aa).

A purine D-ribonucleoside is bound at residue His-4. Phosphate-binding positions include Gly-20, Arg-24, Arg-43, and Arg-87–Ser-90. A purine D-ribonucleoside contacts are provided by residues Glu-181–Glu-183 and Ser-205–Asp-206. Asp-206 serves as the catalytic Proton donor.

This sequence belongs to the PNP/UDP phosphorylase family. As to quaternary structure, homohexamer; trimer of homodimers.

The enzyme catalyses a purine D-ribonucleoside + phosphate = a purine nucleobase + alpha-D-ribose 1-phosphate. The catalysed reaction is a purine 2'-deoxy-D-ribonucleoside + phosphate = a purine nucleobase + 2-deoxy-alpha-D-ribose 1-phosphate. Its function is as follows. Catalyzes the reversible phosphorolytic breakdown of the N-glycosidic bond in the beta-(deoxy)ribonucleoside molecules, with the formation of the corresponding free purine bases and pentose-1-phosphate. This Mycoplasma pneumoniae (strain ATCC 29342 / M129 / Subtype 1) (Mycoplasmoides pneumoniae) protein is Purine nucleoside phosphorylase DeoD-type.